A 144-amino-acid chain; its full sequence is Grifin (144 aa).

Residues 5–133 (FEAFCAGGLA…DHQLAQVELA (129 aa)) form the Galectin domain. At Ser138 the chain carries Phosphoserine.

As to quaternary structure, homodimer. In terms of tissue distribution, lens-specific. Located at the interface between lens fiber cells (at protein level).

The protein is Grifin (Grifin) of Rattus norvegicus (Rat).